Here is a 241-residue protein sequence, read N- to C-terminus: Copper transport protein CTR3 (241 aa).

Over 1–41 (MNMGGSSSTAAKKATCKISMLWNWYTIDTCFIARSWRNDTK) the chain is Lumenal. Residues 42–62 (GKFAGSCIGCFALVVVAQWLT) traverse the membrane as a helical segment. The Cytoplasmic portion of the chain corresponds to 63-159 (RFSRQFDVEL…SCCTLITPVD (97 aa)). Residues 160–180 (LYPTFLDHMIRVTIFVLQWGL) traverse the membrane as a helical segment. Topologically, residues 181–182 (SY) are lumenal. The chain crosses the membrane as a helical span at residues 183 to 203 (IIMLLFMYYNGYIIISCLIGA). At 204–241 (IVGRFIFCYEPLGSLGANGSAQGTVSYDKESDDRKCCL) the chain is on the cytoplasmic side.

This sequence belongs to the copper transporter (Ctr) (TC 1.A.56) family. SLC31A subfamily.

It is found in the cytoplasmic vesicle membrane. Functionally, required for high affinity copper (probably reduced Cu I) transport into the cell. The sequence is that of Copper transport protein CTR3 (CTR3) from Saccharomyces cerevisiae (strain ATCC 204508 / S288c) (Baker's yeast).